We begin with the raw amino-acid sequence, 232 residues long: Ornithine carbamoyltransferase (232 aa).

Residues Gln-15, Arg-39, and 66 to 69 (HPTQ) contribute to the carbamoyl phosphate site. L-ornithine is bound by residues Asn-99, Asp-163, and 167–168 (SM). Carbamoyl phosphate-binding positions include 204–207 (HCLP) and Thr-232.

It belongs to the aspartate/ornithine carbamoyltransferase superfamily. OTCase family.

The protein resides in the cytoplasm. It catalyses the reaction carbamoyl phosphate + L-ornithine = L-citrulline + phosphate + H(+). It participates in amino-acid biosynthesis; L-arginine biosynthesis; L-arginine from L-ornithine and carbamoyl phosphate: step 1/3. Reversibly catalyzes the transfer of the carbamoyl group from carbamoyl phosphate (CP) to the N(epsilon) atom of ornithine (ORN) to produce L-citrulline. The chain is Ornithine carbamoyltransferase (argF) from Neisseria perflava.